Reading from the N-terminus, the 172-residue chain is Adenylate kinase isoenzyme 6 (172 aa).

ATP is bound by residues Gly13, Gly15, Lys16, Thr17, and Thr18. The segment at 33 to 56 is NMP; it reads NVGDLAREEQLYDGYDEEYDCPIL. An NMPbind region spans residues 33–56; sequence NVGDLAREEQLYDGYDEEYDCPIL. The tract at residues 108-118 is LID; that stretch reads TRGYNEKKLTD. The ATP site is built by Arg109 and Lys148.

The protein belongs to the adenylate kinase family. AK6 subfamily. In terms of assembly, monomer and homodimer. Interacts with small ribosomal subunit protein uS11. Not a structural component of 43S pre-ribosomes, but transiently interacts with them by binding to uS11. Interacts with COIL (via C-terminus). As to expression, expressed in heart, brain, placenta, lung, liver, skeletal muscle, kidney, pancreas, chorionic villi and the central nervous system.

It is found in the cytoplasm. The protein localises to the nucleus. It localises to the nucleoplasm. Its subcellular location is the cajal body. It catalyses the reaction AMP + ATP = 2 ADP. It carries out the reaction ATP + H2O = ADP + phosphate + H(+). Its function is as follows. Broad-specificity nucleoside monophosphate (NMP) kinase that catalyzes the reversible transfer of the terminal phosphate group between nucleoside triphosphates and monophosphates. Also has ATPase activity. Involved in the late cytoplasmic maturation steps of the 40S ribosomal particles, specifically 18S rRNA maturation. While NMP activity is not required for ribosome maturation, ATPase activity is. Associates transiently with small ribosomal subunit protein uS11. ATP hydrolysis breaks the interaction with uS11. May temporarily remove uS11 from the ribosome to enable a conformational change of the ribosomal RNA that is needed for the final maturation step of the small ribosomal subunit. Its NMP activity may have a role in nuclear energy homeostasis. AMP and dAMP are the preferred substrates, but CMP and dCMP are also good substrates. IMP is phosphorylated to a much lesser extent. All nucleoside triphosphates ATP, GTP, UTP, CTP, dATP, dCTP, dGTP, and TTP are accepted as phosphate donors. CTP is the best phosphate donor, followed by UTP, ATP, GTP and dCTP. May be involved in regulation of Cajal body (CB) formation. The protein is Adenylate kinase isoenzyme 6 of Homo sapiens (Human).